A 229-amino-acid polypeptide reads, in one-letter code: Potassium/proton antiporter CemA (229 aa).

Helical transmembrane passes span 7–27 (FTPL…SLSF), 107–127 (ILHF…SLLG), and 189–209 (IISG…KYWI).

Belongs to the CemA family.

The protein resides in the plastid. It localises to the chloroplast inner membrane. The catalysed reaction is K(+)(in) + H(+)(out) = K(+)(out) + H(+)(in). Functionally, contributes to K(+)/H(+) antiport activity by supporting proton efflux to control proton extrusion and homeostasis in chloroplasts in a light-dependent manner to modulate photosynthesis. Prevents excessive induction of non-photochemical quenching (NPQ) under continuous-light conditions. Indirectly promotes efficient inorganic carbon uptake into chloroplasts. The sequence is that of Potassium/proton antiporter CemA from Lactuca sativa (Garden lettuce).